The sequence spans 514 residues: MTDKLIIFDTTLRDGEQSPGASMTKEEKIRIAKHLERMKVDVIEAGFAASSNGDFDAIHTIAGLVKDSTICSLARANDKDIQRAADALKPANSARIHTFIATSPLHMEKKLRMTPDQVFEQARLAVRFARKFTDNVEFSPEDGSRSDLDFLCRVLEAVIAEGATTINIADTVGYGVPELYGNLVKTLRERIPNSDKAIFSVHCHNDLGMAVANSLAGVKIGGARQVECTINGLGERAGNTSLEEIVMAVKTRKDYFGLDVGLDTTQIVPTSKLVSQITGFVVQPNKAVVGANAFAHASGIHQDGVLKARDTYEIMRAEDVGWTANKIVLGKLSGRNAFKQRLQELGVSLDSETELNAAFMRFKDLADRKSDIFDEDIIAIVSEESAFAQEQEHYKFVSLSQRSETGEQPQAKVVLALDGKEVTGEARGNGPVDATFNAIEGEVGSGSELLLYSVNAITTGTQAQGEVTVRLSKSGRIVNGVGTDPDIVAASAKAYIAALNKLHSKDDKLNPQRS.

The Pyruvate carboxyltransferase domain maps to 5–268 (LIIFDTTLRD…DVGLDTTQIV (264 aa)). Residues D14, H202, H204, and N239 each contribute to the Mn(2+) site. The regulatory domain stretch occupies residues 395 to 514 (KFVSLSQRSE…KDDKLNPQRS (120 aa)).

The protein belongs to the alpha-IPM synthase/homocitrate synthase family. LeuA type 1 subfamily. Homodimer. It depends on Mn(2+) as a cofactor.

It is found in the cytoplasm. The catalysed reaction is 3-methyl-2-oxobutanoate + acetyl-CoA + H2O = (2S)-2-isopropylmalate + CoA + H(+). Its pathway is amino-acid biosynthesis; L-leucine biosynthesis; L-leucine from 3-methyl-2-oxobutanoate: step 1/4. Functionally, catalyzes the condensation of the acetyl group of acetyl-CoA with 3-methyl-2-oxobutanoate (2-ketoisovalerate) to form 3-carboxy-3-hydroxy-4-methylpentanoate (2-isopropylmalate). The polypeptide is 2-isopropylmalate synthase (Burkholderia ambifaria (strain ATCC BAA-244 / DSM 16087 / CCUG 44356 / LMG 19182 / AMMD) (Burkholderia cepacia (strain AMMD))).